Reading from the N-terminus, the 322-residue chain is Cytochrome c biogenesis protein CcsA (322 aa).

7 consecutive transmembrane segments (helical) span residues 9-29 (ILTH…LITL), 43-63 (GMIA…IYSG), 70-90 (LYES…VPKI), 142-162 (MLLS…LLVI), 226-246 (VISL…VWAN), 259-274 (ETWA…IYSH), and 287-307 (AIVA…VNLL).

The protein belongs to the CcmF/CycK/Ccl1/NrfE/CcsA family. As to quaternary structure, may interact with Ccs1.

The protein localises to the plastid. The protein resides in the chloroplast thylakoid membrane. Functionally, required during biogenesis of c-type cytochromes (cytochrome c6 and cytochrome f) at the step of heme attachment. In Chloranthus spicatus (Chulantree), this protein is Cytochrome c biogenesis protein CcsA.